A 159-amino-acid chain; its full sequence is Major latex protein 149 (159 aa).

The protein belongs to the MLP family. As to expression, laticifer.

The protein localises to the vacuole. It localises to the cytoplasmic vesicle. Its function is as follows. Not known; MLPs constitute up to 50% of the soluble latex protein. This chain is Major latex protein 149 (MLP149), found in Papaver somniferum (Opium poppy).